Consider the following 195-residue polypeptide: 7-methyl-GTP pyrophosphatase (195 aa).

Asp-70 acts as the Proton acceptor in catalysis.

This sequence belongs to the Maf family. YceF subfamily. Requires a divalent metal cation as cofactor.

The protein localises to the cytoplasm. The enzyme catalyses N(7)-methyl-GTP + H2O = N(7)-methyl-GMP + diphosphate + H(+). In terms of biological role, nucleoside triphosphate pyrophosphatase that hydrolyzes 7-methyl-GTP (m(7)GTP). May have a dual role in cell division arrest and in preventing the incorporation of modified nucleotides into cellular nucleic acids. In Shewanella sp. (strain MR-7), this protein is 7-methyl-GTP pyrophosphatase.